The following is a 420-amino-acid chain: Diaminopimelate decarboxylase (420 aa).

Lys54 carries the post-translational modification N6-(pyridoxal phosphate)lysine. His191 contributes to the substrate binding site. Pyridoxal 5'-phosphate is bound by residues Gly227 and 268 to 271 (EPGR). Residues Arg271, Arg307, and Tyr311 each contribute to the substrate site. Catalysis depends on Cys342, which acts as the Proton donor. Positions 343 and 378 each coordinate substrate. Position 378 (Tyr378) interacts with pyridoxal 5'-phosphate.

Belongs to the Orn/Lys/Arg decarboxylase class-II family. LysA subfamily. The cofactor is pyridoxal 5'-phosphate.

It catalyses the reaction meso-2,6-diaminopimelate + H(+) = L-lysine + CO2. It functions in the pathway amino-acid biosynthesis; L-lysine biosynthesis via DAP pathway; L-lysine from DL-2,6-diaminopimelate: step 1/1. Is activated by 2,3-dimercaptopropan-1-ol. Specifically catalyzes the decarboxylation of meso-diaminopimelate (meso-DAP) to L-lysine. Is not active against the DD- or LL-isomers of diaminopimelate. The polypeptide is Diaminopimelate decarboxylase (Escherichia coli (strain K12)).